A 444-amino-acid polypeptide reads, in one-letter code: N-succinylarginine dihydrolase (444 aa).

Substrate contacts are provided by residues 19-28, asparagine 110, and 137-138; these read AGLSFGNVAS and HR. Residue glutamate 174 is part of the active site. Arginine 214 is a binding site for substrate. Histidine 250 is an active-site residue. Substrate is bound by residues aspartate 252 and asparagine 362. The active-site Nucleophile is cysteine 368.

The protein belongs to the succinylarginine dihydrolase family. In terms of assembly, homodimer.

It catalyses the reaction N(2)-succinyl-L-arginine + 2 H2O + 2 H(+) = N(2)-succinyl-L-ornithine + 2 NH4(+) + CO2. Its pathway is amino-acid degradation; L-arginine degradation via AST pathway; L-glutamate and succinate from L-arginine: step 2/5. Its function is as follows. Catalyzes the hydrolysis of N(2)-succinylarginine into N(2)-succinylornithine, ammonia and CO(2). The protein is N-succinylarginine dihydrolase of Shewanella frigidimarina (strain NCIMB 400).